The following is a 274-amino-acid chain: Cytochrome b-c1 complex subunit Rieske, mitochondrial (274 aa).

Residues 29 to 49 (XXXXXXXXTPEPPVLDPKRPI) are disordered. Residues 79 to 103 (SHTDIKVPDFSDYRRSEVLDKTKSS) are Mitochondrial matrix-facing. A helical membrane pass occupies residues 104 to 140 (RESSDARKVFSYMVTATTAVGVTYAAKSIVTQFISSM). The Mitochondrial intermembrane portion of the chain corresponds to 141-274 (SASADVLAMS…FLSDDMVVVG (134 aa)). The Rieske domain occupies 187–272 (EAAVELSQLR…YEFLSDDMVV (86 aa)). 5 residues coordinate [2Fe-2S] cluster: C217, H219, C236, H239, and S241. An intrachain disulfide couples C222 to C238.

Belongs to the Rieske iron-sulfur protein family. Component of the ubiquinol-cytochrome c oxidoreductase (cytochrome b-c1 complex, complex III, CIII), a multisubunit enzyme composed of 11 subunits. The complex is composed of 3 respiratory subunits cytochrome b, cytochrome c1 and Rieske protein UQCRFS1, 2 core protein subunits UQCRC1/QCR1 and UQCRC2/QCR2, and 6 low-molecular weight protein subunits UQCRH/QCR6, UQCRB/QCR7, UQCRQ/QCR8, UQCR10/QCR9, UQCR11/QCR10 and subunit 9, the cleavage product of Rieske protein UQCRFS1. The complex exists as an obligatory dimer and forms supercomplexes (SCs) in the inner mitochondrial membrane with NADH-ubiquinone oxidoreductase (complex I, CI) and cytochrome c oxidase (complex IV, CIV), resulting in different assemblies (supercomplex SCI(1)III(2)IV(1) and megacomplex MCI(2)III(2)IV(2)). Incorporation of the Rieske protein UQCRFS1 is the penultimate step in complex III assembly. Interacts with TTC19, which is involved in the clearance of UQCRFS1 fragments. As to quaternary structure, component of the ubiquinol-cytochrome c oxidoreductase (cytochrome b-c1 complex, complex III, CIII). Subunit 9 corresponds to the mitochondrial targeting sequence (MTS) of Rieske protein UQCRFS1. It is retained after processing and incorporated inside complex III, where it remains bound to the complex and localizes between the 2 core subunits UQCRC1/QCR1 and UQCRC2/QCR2. The cofactor is [2Fe-2S] cluster. Proteolytic processing is necessary for the correct insertion of UQCRFS1 in the complex III dimer. Several fragments are generated during UQCRFS1 insertion, most probably due to the endogenous matrix-processing peptidase (MPP) activity of the 2 core protein subunits UQCRC1/QCR1 and UQCRC2/QCR2, which are homologous to the 2 mitochondrial-processing peptidase (MPP) subunits beta-MPP and alpha-MPP respectively. The action of the protease is also necessary for the clearance of the UQCRFS1 fragments.

Its subcellular location is the mitochondrion inner membrane. The enzyme catalyses a quinol + 2 Fe(III)-[cytochrome c](out) = a quinone + 2 Fe(II)-[cytochrome c](out) + 2 H(+)(out). Component of the ubiquinol-cytochrome c oxidoreductase, a multisubunit transmembrane complex that is part of the mitochondrial electron transport chain which drives oxidative phosphorylation. The respiratory chain contains 3 multisubunit complexes succinate dehydrogenase (complex II, CII), ubiquinol-cytochrome c oxidoreductase (cytochrome b-c1 complex, complex III, CIII) and cytochrome c oxidase (complex IV, CIV), that cooperate to transfer electrons derived from NADH and succinate to molecular oxygen, creating an electrochemical gradient over the inner membrane that drives transmembrane transport and the ATP synthase. The cytochrome b-c1 complex catalyzes electron transfer from ubiquinol to cytochrome c, linking this redox reaction to translocation of protons across the mitochondrial inner membrane, with protons being carried across the membrane as hydrogens on the quinol. In the process called Q cycle, 2 protons are consumed from the matrix, 4 protons are released into the intermembrane space and 2 electrons are passed to cytochrome c. The Rieske protein is a catalytic core subunit containing a [2Fe-2S] iron-sulfur cluster. It cycles between 2 conformational states during catalysis to transfer electrons from the quinol bound in the Q(0) site in cytochrome b to cytochrome c1. Incorporation of UQCRFS1 is the penultimate step in complex III assembly. Its function is as follows. Component of the ubiquinol-cytochrome c oxidoreductase (cytochrome b-c1 complex, complex III, CIII). UQCRFS1 undergoes proteolytic processing once it is incorporated in the complex III dimer. One of the fragments, called subunit 9, corresponds to its mitochondrial targeting sequence (MTS). The proteolytic processing is necessary for the correct insertion of UQCRFS1 in the complex III dimer, but the persistence of UQCRFS1-derived fragments may prevent newly imported UQCRFS1 to be processed and assembled into complex III and is detrimental for the complex III structure and function. This chain is Cytochrome b-c1 complex subunit Rieske, mitochondrial (UQCRFS1), found in Saimiri sciureus (Common squirrel monkey).